The sequence spans 1930 residues: Myosin-16 (1930 aa).

In terms of domain architecture, Myosin N-terminal SH3-like spans Asp35 to Pro84. The 687-residue stretch at Tyr88–Asp774 folds into the Myosin motor domain. Gly181 to Thr188 provides a ligand contact to ATP. Actin-binding regions lie at residues Leu652–Glu674 and Lys753–Ala767. Positions Leu777 to Gly806 constitute an IQ domain. A coiled-coil region spans residues Leu835–Arg1921. The disordered stretch occupies residues Glu1116 to Arg1137. Positions Ala1120–Arg1137 are enriched in basic and acidic residues.

Belongs to the TRAFAC class myosin-kinesin ATPase superfamily. Myosin family.

Its subcellular location is the cytoplasm. The protein resides in the myofibril. In terms of biological role, may play a role in masticatory muscles contraction. The sequence is that of Myosin-16 from Canis lupus familiaris (Dog).